The following is a 512-amino-acid chain: Histidine ammonia-lyase (512 aa).

The 5-imidazolinone (Ala-Gly) cross-link spans 142–144 (ASG). The residue at position 143 (Ser143) is a 2,3-didehydroalanine (Ser).

Belongs to the PAL/histidase family. In terms of processing, contains an active site 4-methylidene-imidazol-5-one (MIO), which is formed autocatalytically by cyclization and dehydration of residues Ala-Ser-Gly.

Its subcellular location is the cytoplasm. The enzyme catalyses L-histidine = trans-urocanate + NH4(+). It participates in amino-acid degradation; L-histidine degradation into L-glutamate; N-formimidoyl-L-glutamate from L-histidine: step 1/3. The protein is Histidine ammonia-lyase of Bartonella quintana (strain Toulouse) (Rochalimaea quintana).